The primary structure comprises 343 residues: S-adenosylmethionine:tRNA ribosyltransferase-isomerase (343 aa).

It belongs to the QueA family. As to quaternary structure, monomer.

The protein resides in the cytoplasm. It carries out the reaction 7-aminomethyl-7-carbaguanosine(34) in tRNA + S-adenosyl-L-methionine = epoxyqueuosine(34) in tRNA + adenine + L-methionine + 2 H(+). It participates in tRNA modification; tRNA-queuosine biosynthesis. Its function is as follows. Transfers and isomerizes the ribose moiety from AdoMet to the 7-aminomethyl group of 7-deazaguanine (preQ1-tRNA) to give epoxyqueuosine (oQ-tRNA). In Dehalococcoides mccartyi (strain CBDB1), this protein is S-adenosylmethionine:tRNA ribosyltransferase-isomerase.